The sequence spans 381 residues: Adenylate cyclase (381 aa).

The disordered stretch occupies residues 1–30; it reads MTVDDTGSGADGDGRVDPEPAPDSADPGED. The 110-residue stretch at 191 to 300 folds into the Guanylate cyclase domain; the sequence is AVGFADLVGF…TTVNLASRLT (110 aa). Residues D196 and D240 each contribute to the Mg(2+) site.

The protein belongs to the adenylyl cyclase class-3 family. Mg(2+) is required as a cofactor.

The catalysed reaction is ATP = 3',5'-cyclic AMP + diphosphate. The polypeptide is Adenylate cyclase (cya) (Streptomyces coelicolor (strain ATCC BAA-471 / A3(2) / M145)).